Consider the following 128-residue polypeptide: Cytochrome c-type biogenesis protein CcmE (128 aa).

Over 1–8 (MQKRVRNR) the chain is Cytoplasmic. The helical; Signal-anchor for type II membrane protein transmembrane segment at 9–29 (LITIIICFCSACLGISIILYN) threads the bilayer. At 30–128 (LEKNIVFFLP…KHDENYRPPQ (99 aa)) the chain is on the periplasmic side. The heme site is built by H120 and Y124.

It belongs to the CcmE/CycJ family.

It is found in the cell inner membrane. In terms of biological role, heme chaperone required for the biogenesis of c-type cytochromes. Transiently binds heme delivered by CcmC and transfers the heme to apo-cytochromes in a process facilitated by CcmF and CcmH. In Rickettsia conorii (strain ATCC VR-613 / Malish 7), this protein is Cytochrome c-type biogenesis protein CcmE.